The primary structure comprises 179 residues: ATP synthase subunit delta (179 aa).

It belongs to the ATPase delta chain family. In terms of assembly, F-type ATPases have 2 components, F(1) - the catalytic core - and F(0) - the membrane proton channel. F(1) has five subunits: alpha(3), beta(3), gamma(1), delta(1), epsilon(1). F(0) has three main subunits: a(1), b(2) and c(10-14). The alpha and beta chains form an alternating ring which encloses part of the gamma chain. F(1) is attached to F(0) by a central stalk formed by the gamma and epsilon chains, while a peripheral stalk is formed by the delta and b chains.

The protein localises to the cell inner membrane. In terms of biological role, f(1)F(0) ATP synthase produces ATP from ADP in the presence of a proton or sodium gradient. F-type ATPases consist of two structural domains, F(1) containing the extramembraneous catalytic core and F(0) containing the membrane proton channel, linked together by a central stalk and a peripheral stalk. During catalysis, ATP synthesis in the catalytic domain of F(1) is coupled via a rotary mechanism of the central stalk subunits to proton translocation. This protein is part of the stalk that links CF(0) to CF(1). It either transmits conformational changes from CF(0) to CF(1) or is implicated in proton conduction. This Acidithiobacillus ferrooxidans (strain ATCC 23270 / DSM 14882 / CIP 104768 / NCIMB 8455) (Ferrobacillus ferrooxidans (strain ATCC 23270)) protein is ATP synthase subunit delta.